We begin with the raw amino-acid sequence, 363 residues long: 3-dehydroquinate synthase (363 aa).

Residues 109–113 (GASTD), 133–134 (TT), lysine 146, and lysine 155 each bind NAD(+). 3 residues coordinate Zn(2+): glutamate 188, histidine 251, and histidine 267.

Belongs to the sugar phosphate cyclases superfamily. Dehydroquinate synthase family. NAD(+) serves as cofactor. Co(2+) is required as a cofactor. Requires Zn(2+) as cofactor.

Its subcellular location is the cytoplasm. The enzyme catalyses 7-phospho-2-dehydro-3-deoxy-D-arabino-heptonate = 3-dehydroquinate + phosphate. It participates in metabolic intermediate biosynthesis; chorismate biosynthesis; chorismate from D-erythrose 4-phosphate and phosphoenolpyruvate: step 2/7. Functionally, catalyzes the conversion of 3-deoxy-D-arabino-heptulosonate 7-phosphate (DAHP) to dehydroquinate (DHQ). This Streptomyces coelicolor (strain ATCC BAA-471 / A3(2) / M145) protein is 3-dehydroquinate synthase.